The sequence spans 299 residues: tRNA dimethylallyltransferase (299 aa).

8–15 serves as a coordination point for ATP; that stretch reads GPTASGKT. Residue 10–15 participates in substrate binding; that stretch reads TASGKT. The interval 33–36 is interaction with substrate tRNA; that stretch reads DSQQ.

Belongs to the IPP transferase family. As to quaternary structure, monomer. Mg(2+) serves as cofactor.

It carries out the reaction adenosine(37) in tRNA + dimethylallyl diphosphate = N(6)-dimethylallyladenosine(37) in tRNA + diphosphate. Its function is as follows. Catalyzes the transfer of a dimethylallyl group onto the adenine at position 37 in tRNAs that read codons beginning with uridine, leading to the formation of N6-(dimethylallyl)adenosine (i(6)A). This chain is tRNA dimethylallyltransferase, found in Anaeromyxobacter dehalogenans (strain 2CP-C).